An 80-amino-acid chain; its full sequence is Small ribosomal subunit protein uS17 (80 aa).

Belongs to the universal ribosomal protein uS17 family. As to quaternary structure, part of the 30S ribosomal subunit.

Its function is as follows. One of the primary rRNA binding proteins, it binds specifically to the 5'-end of 16S ribosomal RNA. The sequence is that of Small ribosomal subunit protein uS17 from Cereibacter sphaeroides (strain ATCC 17029 / ATH 2.4.9) (Rhodobacter sphaeroides).